Here is a 359-residue protein sequence, read N- to C-terminus: DNA replication and repair protein RecF (359 aa).

30–37 (GKNGIGKT) is a binding site for ATP.

This sequence belongs to the RecF family.

It is found in the cytoplasm. Its function is as follows. The RecF protein is involved in DNA metabolism; it is required for DNA replication and normal SOS inducibility. RecF binds preferentially to single-stranded, linear DNA. It also seems to bind ATP. In Flavobacterium johnsoniae (strain ATCC 17061 / DSM 2064 / JCM 8514 / BCRC 14874 / CCUG 350202 / NBRC 14942 / NCIMB 11054 / UW101) (Cytophaga johnsonae), this protein is DNA replication and repair protein RecF.